Reading from the N-terminus, the 186-residue chain is Orotate phosphoribosyltransferase (186 aa).

5-phospho-alpha-D-ribose 1-diphosphate is bound by residues Arg-93, Lys-94, Lys-97, His-99, and 119 to 127 (EDVTTTGGS). 2 residues coordinate orotate: Thr-123 and Arg-151.

The protein belongs to the purine/pyrimidine phosphoribosyltransferase family. PyrE subfamily. Homodimer. Requires Mg(2+) as cofactor.

It carries out the reaction orotidine 5'-phosphate + diphosphate = orotate + 5-phospho-alpha-D-ribose 1-diphosphate. Its pathway is pyrimidine metabolism; UMP biosynthesis via de novo pathway; UMP from orotate: step 1/2. Its function is as follows. Catalyzes the transfer of a ribosyl phosphate group from 5-phosphoribose 1-diphosphate to orotate, leading to the formation of orotidine monophosphate (OMP). This is Orotate phosphoribosyltransferase from Pyrococcus horikoshii (strain ATCC 700860 / DSM 12428 / JCM 9974 / NBRC 100139 / OT-3).